Consider the following 58-residue polypeptide: Curromycin resistance protein (58 aa).

The segment at 1–37 (MSVVALGATSITPPHGPESQGRPFPARGPVRPSARAR) is disordered. Positions 25–37 (PARGPVRPSARAR) are enriched in low complexity.

This chain is Curromycin resistance protein (cre), found in Streptomyces hygroscopicus.